The following is a 157-amino-acid chain: UPF0225 protein PSPPH_1399 (157 aa).

This sequence belongs to the UPF0225 family.

This chain is UPF0225 protein PSPPH_1399, found in Pseudomonas savastanoi pv. phaseolicola (strain 1448A / Race 6) (Pseudomonas syringae pv. phaseolicola (strain 1448A / Race 6)).